Here is a 116-residue protein sequence, read N- to C-terminus: Putative serine proteinase inhibitor 2 homolog first part (116 aa).

It belongs to the serpin family. Poxviruses subfamily.

This chain is Putative serine proteinase inhibitor 2 homolog first part, found in Vaccinia virus (strain Copenhagen) (VACV).